We begin with the raw amino-acid sequence, 376 residues long: Chaperone protein DnaJ (376 aa).

The J domain maps to 5–70; that stretch reads DYYEILGVSK…QKRAAYDQYG (66 aa). The segment at 131-209 adopts a CR-type zinc-finger fold; it reads GVTKEIRIPT…CHGHGRVERS (79 aa). Zn(2+) is bound by residues C144, C147, C161, C164, C183, C186, C197, and C200. CXXCXGXG motif repeat units follow at residues 144–151, 161–168, 183–190, and 197–204; these read CDVCHGSG, CPTCHGSG, CPHCQGRG, and CNKCHGHG.

Belongs to the DnaJ family. As to quaternary structure, homodimer. It depends on Zn(2+) as a cofactor.

The protein resides in the cytoplasm. In terms of biological role, participates actively in the response to hyperosmotic and heat shock by preventing the aggregation of stress-denatured proteins and by disaggregating proteins, also in an autonomous, DnaK-independent fashion. Unfolded proteins bind initially to DnaJ; upon interaction with the DnaJ-bound protein, DnaK hydrolyzes its bound ATP, resulting in the formation of a stable complex. GrpE releases ADP from DnaK; ATP binding to DnaK triggers the release of the substrate protein, thus completing the reaction cycle. Several rounds of ATP-dependent interactions between DnaJ, DnaK and GrpE are required for fully efficient folding. Also involved, together with DnaK and GrpE, in the DNA replication of plasmids through activation of initiation proteins. This chain is Chaperone protein DnaJ, found in Shigella boydii serotype 18 (strain CDC 3083-94 / BS512).